The primary structure comprises 142 residues: Protein E6 (142 aa).

Zinc fingers lie at residues C27–C63 and C100–C136.

The protein belongs to the papillomaviridae E6 protein family. Forms homodimers. Interacts with ubiquitin-protein ligase UBE3A/E6-AP; this interaction stimulates UBE3A ubiquitin activity. Interacts with host BAK1.

It localises to the host cytoplasm. Its subcellular location is the host nucleus. In terms of biological role, plays a major role in the induction and maintenance of cellular transformation. E6 associates with host UBE3A/E6-AP ubiquitin-protein ligase and modulates its activity. Protects host keratinocytes from apoptosis by mediating the degradation of host BAK1. May also inhibit host immune response. The protein is Protein E6 of Homo sapiens (Human).